Reading from the N-terminus, the 121-residue chain is Small ribosomal subunit protein bS16 (121 aa).

The segment covering 97-114 (LAKAKTKDEENDNSKVES) has biased composition (basic and acidic residues). Residues 97 to 121 (LAKAKTKDEENDNSKVESEGNEAES) form a disordered region.

This sequence belongs to the bacterial ribosomal protein bS16 family.

In Prochlorococcus marinus (strain AS9601), this protein is Small ribosomal subunit protein bS16.